Reading from the N-terminus, the 445-residue chain is Trigger factor (445 aa).

Residues 171-256 (NDIVIIDFKG…VHVVNEVETP (86 aa)) form the PPIase FKBP-type domain.

The protein belongs to the FKBP-type PPIase family. Tig subfamily.

The protein localises to the cytoplasm. It catalyses the reaction [protein]-peptidylproline (omega=180) = [protein]-peptidylproline (omega=0). In terms of biological role, involved in protein export. Acts as a chaperone by maintaining the newly synthesized protein in an open conformation. Functions as a peptidyl-prolyl cis-trans isomerase. In Malacoplasma penetrans (strain HF-2) (Mycoplasma penetrans), this protein is Trigger factor.